Here is a 142-residue protein sequence, read N- to C-terminus: Transcriptional regulator MraZ (142 aa).

SpoVT-AbrB domains follow at residues 5-51 (ASSL…PRPE) and 77-120 (AMDV…DKAT).

Belongs to the MraZ family. In terms of assembly, forms oligomers.

Its subcellular location is the cytoplasm. The protein localises to the nucleoid. The protein is Transcriptional regulator MraZ of Acidovorax ebreus (strain TPSY) (Diaphorobacter sp. (strain TPSY)).